Here is a 261-residue protein sequence, read N- to C-terminus: Adenosylcobinamide-GDP ribazoletransferase (261 aa).

The next 7 helical transmembrane spans lie at 9–29, 41–61, 64–84, 114–134, 141–161, 196–216, and 235–255; these read LELFLLAVSFFSRIPVPVSLP, YFALVGLLLGAICALVYSLAT, FSTNISVFLTMVLSLLLTGAF, IGTYGSSALIMVLLGKYLLLT, SLVPVWLLAYTLSRAVAASLI, ATLLYFSWQFIGVMIAASLIF, and CLGAAQQLMEILIYLILLAFL.

The protein belongs to the CobS family. Mg(2+) serves as cofactor.

Its subcellular location is the cell inner membrane. The catalysed reaction is alpha-ribazole + adenosylcob(III)inamide-GDP = adenosylcob(III)alamin + GMP + H(+). It catalyses the reaction alpha-ribazole 5'-phosphate + adenosylcob(III)inamide-GDP = adenosylcob(III)alamin 5'-phosphate + GMP + H(+). The protein operates within cofactor biosynthesis; adenosylcobalamin biosynthesis; adenosylcobalamin from cob(II)yrinate a,c-diamide: step 7/7. Functionally, joins adenosylcobinamide-GDP and alpha-ribazole to generate adenosylcobalamin (Ado-cobalamin). Also synthesizes adenosylcobalamin 5'-phosphate from adenosylcobinamide-GDP and alpha-ribazole 5'-phosphate. The chain is Adenosylcobinamide-GDP ribazoletransferase from Vibrio cholerae serotype O1 (strain ATCC 39541 / Classical Ogawa 395 / O395).